Consider the following 233-residue polypeptide: Large ribosomal subunit protein uL3 (233 aa).

The protein belongs to the universal ribosomal protein uL3 family. Part of the 50S ribosomal subunit. Forms a cluster with proteins L14 and L19.

One of the primary rRNA binding proteins, it binds directly near the 3'-end of the 23S rRNA, where it nucleates assembly of the 50S subunit. The sequence is that of Large ribosomal subunit protein uL3 from Ureaplasma parvum serovar 3 (strain ATCC 27815 / 27 / NCTC 11736).